Consider the following 757-residue polypeptide: RNA-directed RNA polymerase catalytic subunit (757 aa).

Residues 53-82 (GRWTTNTETGAPQLNPIDGPLPEDNEPSGY) are disordered. Residues 55–64 (WTTNTETGAP) show a composition bias toward polar residues. Short sequence motifs (nuclear localization signal) lie at residues 187–195 (RKRRVRDNV) and 203–216 (RTIG…NKRS). The interval 249–256 (RGFVYFVE) is promoter-binding site. In terms of domain architecture, RdRp catalytic spans 286-483 (VRKMMTNSQD…GINMSKKKSY (198 aa)).

It belongs to the influenza viruses polymerase PB1 family. As to quaternary structure, influenza RNA polymerase is composed of three subunits: PB1, PB2 and PA. Interacts (via N-terminus) with PA (via C-terminus). Interacts (via C-terminus) with PB2 (via N-terminus); this interaction is essential for transcription initiation. Interacts (via C-terminus) with human PKP2 (via N-terminus); the interaction competitively inhibits the interaction between the RNA polymerase subunits PB1 and PB2. Post-translationally, phosphorylated by host PRKCA.

The protein localises to the host nucleus. It is found in the host cytoplasm. It catalyses the reaction RNA(n) + a ribonucleoside 5'-triphosphate = RNA(n+1) + diphosphate. In terms of biological role, RNA-dependent RNA polymerase which is responsible for replication and transcription of virus RNA segments. The transcription of viral mRNAs occurs by a unique mechanism called cap-snatching. 5' methylated caps of cellular mRNAs are cleaved after 10-13 nucleotides by PA. In turn, these short capped RNAs are used as primers by PB1 for transcription of viral mRNAs. During virus replication, PB1 initiates RNA synthesis and copy vRNA into complementary RNA (cRNA) which in turn serves as a template for the production of more vRNAs. The sequence is that of RNA-directed RNA polymerase catalytic subunit from Influenza A virus (strain A/USA:Iowa/1943 H1N1).